The primary structure comprises 95 residues: Integration host factor subunit beta (95 aa).

Belongs to the bacterial histone-like protein family. As to quaternary structure, heterodimer of an alpha and a beta chain.

Its function is as follows. This protein is one of the two subunits of integration host factor, a specific DNA-binding protein that functions in genetic recombination as well as in transcriptional and translational control. The sequence is that of Integration host factor subunit beta from Klebsiella pneumoniae (strain 342).